Reading from the N-terminus, the 75-residue chain is RNA-binding protein KhpA (75 aa).

A KH domain is found at 29-75 (SIILELKVSPEDMGKVIGKQGRIAKAIRTVVKAAAIKENKKVVVEII).

This sequence belongs to the KhpA RNA-binding protein family. Forms a complex with KhpB.

The protein resides in the cytoplasm. A probable RNA chaperone. Forms a complex with KhpB which binds to cellular RNA and controls its expression. Plays a role in peptidoglycan (PG) homeostasis and cell length regulation. This is RNA-binding protein KhpA from Clostridium perfringens (strain 13 / Type A).